The following is a 334-amino-acid chain: Glucosyltransferase 3 (334 aa).

Residues Thr16, Arg179, and 249–254 each bind UDP; that span reads SHKSAT.

It belongs to the Gtf3 glucosyltransferase family. As to quaternary structure, homotetramer; a dimer of dimers.

The protein operates within protein modification; protein glycosylation. Its function is as follows. Required for polymorphic O-glycosylation of the serine-rich repeat protein in this bacteria. Catalyzes the second step in glycosylation by transferring glucose from UDP-glucose to the terminal GlcNAc moiety of the 3-O-(N-acetyl-alpha-D-glucosaminyl)-L-seryl-[protein] resulting from the first glycosylation step. Functionally, part of the accessory SecA2/SecY2 system specifically required to export GspB, a serine-rich repeat cell wall protein encoded upstream in the same operon. The chain is Glucosyltransferase 3 from Streptococcus gordonii.